A 108-amino-acid polypeptide reads, in one-letter code: Glutaredoxin-like protein YDR286C homolog (108 aa).

Cys22 and Cys25 form a disulfide bridge.

The protein belongs to the glutaredoxin family. YDR286C subfamily.

This is Glutaredoxin-like protein YDR286C homolog from Dictyostelium discoideum (Social amoeba).